The primary structure comprises 1074 residues: Phospholipase D1 (1074 aa).

In terms of domain architecture, PX spans 81-212 (IKAQVLEVER…TEFLDISQLS (132 aa)). A PH domain is found at 219–328 (PKGIEGMIMK…WGGAIEEFIQ (110 aa)). Residues Cys-240 and Cys-241 are each lipidated (S-palmitoyl cysteine). Positions 459–486 (YLWAHHEKLVIIDQSVAFVGGIDLAYGR) constitute a PLD phosphodiesterase 1 domain. The catalytic stretch occupies residues 463 to 928 (HHEKLVIIDQ…MLGKRDSEMA (466 aa)). 3 positions are modified to phosphoserine: Ser-499, Ser-561, and Ser-629. Positions 891-918 (ELIYVHSKLLIADDNTVIIGSANINDRS) constitute a PLD phosphodiesterase 2 domain.

It belongs to the phospholipase D family. As to quaternary structure, interacts with PIP5K1B. As to expression, expressed abundantly in the pancreas and heart and at high levels in brain, placenta, spleen, uterus and small intestine.

It localises to the cytoplasm. Its subcellular location is the perinuclear region. The protein localises to the endoplasmic reticulum membrane. It is found in the golgi apparatus membrane. The protein resides in the late endosome membrane. The enzyme catalyses a 1,2-diacyl-sn-glycero-3-phosphocholine + H2O = a 1,2-diacyl-sn-glycero-3-phosphate + choline + H(+). It catalyses the reaction ethanol + a 1,2-diacyl-sn-glycero-3-phosphocholine = 1,2-diacyl-sn-glycero-3-phosphoethanol + choline. It carries out the reaction 1,2-dihexadecanoyl-sn-glycero-3-phosphocholine + H2O = 1,2-dihexadecanoyl-sn-glycero-3-phosphate + choline + H(+). With respect to regulation, stimulated by phosphatidylinositol 4,5-bisphosphate and phosphatidylinositol 3,4,5-trisphosphate, activated by the phosphokinase C-alpha, by the ADP-ribosylation factor-1 (ARF-1), and to a lesser extent by GTP-binding proteins: RHO A, RAC-1 and CDC42. Inhibited by oleate. Functionally, function as phospholipase selective for phosphatidylcholine. Implicated as a critical step in numerous cellular pathways, including signal transduction, membrane trafficking, and the regulation of mitosis. May be involved in the regulation of perinuclear intravesicular membrane traffic. The protein is Phospholipase D1 of Homo sapiens (Human).